Here is a 300-residue protein sequence, read N- to C-terminus: F-box/LRR-repeat protein 15 (300 aa).

An N-acetylmethionine modification is found at M1. The 48-residue stretch at 19–66 folds into the F-box domain; sequence LLDLPWEDVLLPHVLSRVPLRQLLWLQRVSRAFRALVQLHLARLRRFD. The interaction with SMURF1 stretch occupies residues 113-269; that stretch reads NPQLRSVALA…EPSLSRLRKR (157 aa). 5 LRR repeats span residues 141-162, 167-188, 194-215, 220-241, and 246-267; these read RLQR…RGLA, ALEE…VYLA, GLRN…QELA, ELQH…RTLA, and ALRS…SRLR.

This sequence belongs to the FBXL15 family. Part of the SCF (SKP1-CUL1-F-box) E3 ubiquitin-protein ligase complex SCF(FBXL15) composed of CUL1, SKP1, RBX1 and FBXL15.

The protein resides in the cytoplasm. It participates in protein modification; protein ubiquitination. Its function is as follows. Substrate recognition component of a SCF (SKP1-CUL1-F-box protein) E3 ubiquitin-protein ligase complex which mediates the ubiquitination and subsequent proteasomal degradation of SMURF1, thereby acting as a positive regulator of the BMP signaling pathway. Required for dorsal/ventral pattern formation and bone mass maintenance. Also mediates ubiquitination of SMURF2 and WWP2. The chain is F-box/LRR-repeat protein 15 (FBXL15) from Bos taurus (Bovine).